The chain runs to 225 residues: Agamous-like MADS-box protein MADS1 (225 aa).

In terms of tissue distribution, expressed in flowers and seeds.

The protein resides in the nucleus. In terms of biological role, probable transcription factor involved in flower development. The chain is Agamous-like MADS-box protein MADS1 from Vitis vinifera (Grape).